A 398-amino-acid chain; its full sequence is 1-deoxy-D-xylulose 5-phosphate reductoisomerase (398 aa).

7 residues coordinate NADPH: Thr11, Gly12, Ser13, Ile14, Arg38, Asn39, and Asn125. Lys126 is a binding site for 1-deoxy-D-xylulose 5-phosphate. An NADPH-binding site is contributed by Glu127. Mn(2+) is bound at residue Asp151. Ser152, Glu153, Ser179, and His202 together coordinate 1-deoxy-D-xylulose 5-phosphate. Residue Glu153 participates in Mn(2+) binding. Gly208 serves as a coordination point for NADPH. 1-deoxy-D-xylulose 5-phosphate-binding residues include Ser215, Asn220, Lys221, and Glu224. Glu224 lines the Mn(2+) pocket.

The protein belongs to the DXR family. It depends on Mg(2+) as a cofactor. Requires Mn(2+) as cofactor.

The catalysed reaction is 2-C-methyl-D-erythritol 4-phosphate + NADP(+) = 1-deoxy-D-xylulose 5-phosphate + NADPH + H(+). Its pathway is isoprenoid biosynthesis; isopentenyl diphosphate biosynthesis via DXP pathway; isopentenyl diphosphate from 1-deoxy-D-xylulose 5-phosphate: step 1/6. Its function is as follows. Catalyzes the NADPH-dependent rearrangement and reduction of 1-deoxy-D-xylulose-5-phosphate (DXP) to 2-C-methyl-D-erythritol 4-phosphate (MEP). This is 1-deoxy-D-xylulose 5-phosphate reductoisomerase from Burkholderia lata (strain ATCC 17760 / DSM 23089 / LMG 22485 / NCIMB 9086 / R18194 / 383).